We begin with the raw amino-acid sequence, 205 residues long: Melanocortin-2 receptor accessory protein 2 (205 aa).

Asparagine 9 is a glycosylation site (N-linked (GlcNAc...) asparagine). The chain crosses the membrane as a helical span at residues 45–65 (IVIGFWVGLAVFVIFMFFVLT). Serine 89 is modified (phosphoserine).

The protein belongs to the MRAP family. As to quaternary structure, homodimer and heterodimer. Forms antiparallel homodimers and heterodimers with MRAP. Interacts with MC1R, MC2R, MC3R, MC4R and MC5R. In terms of tissue distribution, expressed in the adrenal gland and brain. Not expressed in other tissues.

It is found in the cell membrane. It localises to the endoplasmic reticulum membrane. Its function is as follows. Modulator of melanocortin receptor 4 (MC4R), a receptor involved in energy homeostasis. Plays a central role in the control of energy homeostasis and body weight regulation by increasing ligand-sensitivity of MC4R and MC4R-mediated generation of cAMP. May also act as a negative regulator of MC2R: competes with MRAP for binding to MC2R and impairs the binding of corticotropin (ACTH) to MC2R. May also regulate activity of other melanocortin receptors (MC1R, MC3R and MC5R); however, additional evidence is required in vivo. This chain is Melanocortin-2 receptor accessory protein 2 (MRAP2), found in Homo sapiens (Human).